We begin with the raw amino-acid sequence, 62 residues long: UPF0434 protein Smed_3047 (62 aa).

This sequence belongs to the UPF0434 family.

This chain is UPF0434 protein Smed_3047, found in Sinorhizobium medicae (strain WSM419) (Ensifer medicae).